The primary structure comprises 155 residues: Ribosomal RNA large subunit methyltransferase H (155 aa).

S-adenosyl-L-methionine-binding positions include L73, G104, and 123-128; that span reads LSPLTL.

It belongs to the RNA methyltransferase RlmH family. In terms of assembly, homodimer.

It localises to the cytoplasm. It catalyses the reaction pseudouridine(1915) in 23S rRNA + S-adenosyl-L-methionine = N(3)-methylpseudouridine(1915) in 23S rRNA + S-adenosyl-L-homocysteine + H(+). In terms of biological role, specifically methylates the pseudouridine at position 1915 (m3Psi1915) in 23S rRNA. In Azotobacter vinelandii (strain DJ / ATCC BAA-1303), this protein is Ribosomal RNA large subunit methyltransferase H.